Consider the following 89-residue polypeptide: Small ribosomal subunit protein uS15 (89 aa).

This sequence belongs to the universal ribosomal protein uS15 family. As to quaternary structure, part of the 30S ribosomal subunit. Forms a bridge to the 50S subunit in the 70S ribosome, contacting the 23S rRNA.

Functionally, one of the primary rRNA binding proteins, it binds directly to 16S rRNA where it helps nucleate assembly of the platform of the 30S subunit by binding and bridging several RNA helices of the 16S rRNA. Its function is as follows. Forms an intersubunit bridge (bridge B4) with the 23S rRNA of the 50S subunit in the ribosome. This is Small ribosomal subunit protein uS15 from Rhodospirillum centenum (strain ATCC 51521 / SW).